Consider the following 303-residue polypeptide: Glycine--tRNA ligase alpha subunit (303 aa).

The protein belongs to the class-II aminoacyl-tRNA synthetase family. Tetramer of two alpha and two beta subunits.

It is found in the cytoplasm. The catalysed reaction is tRNA(Gly) + glycine + ATP = glycyl-tRNA(Gly) + AMP + diphosphate. This chain is Glycine--tRNA ligase alpha subunit, found in Streptococcus equi subsp. zooepidemicus (strain H70).